The following is a 623-amino-acid chain: Peptidoglycan D,D-transpeptidase MrdA (623 aa).

A helical transmembrane segment spans residues 17–37 (VIVAFGVVVVCFGILIFNLYN). Residue serine 326 is the Acyl-ester intermediate of the active site.

It belongs to the transpeptidase family. MrdA subfamily.

The protein localises to the cell inner membrane. It carries out the reaction Preferential cleavage: (Ac)2-L-Lys-D-Ala-|-D-Ala. Also transpeptidation of peptidyl-alanyl moieties that are N-acyl substituents of D-alanine.. Its pathway is cell wall biogenesis; peptidoglycan biosynthesis. Functionally, catalyzes cross-linking of the peptidoglycan cell wall. This Salmonella typhimurium (strain SL1344) protein is Peptidoglycan D,D-transpeptidase MrdA.